The primary structure comprises 464 residues: MNHSKKVLNVFSLVMINVIAVDSLRTLPISAKLGFSLVFYYIFAALTFFIPVALVAAELATAYPNTGGIYVWVREAFGRRAGFITIWLQWIYNVVWYPTMLAFIAATLSYLIAPHLGNNKFYLLGTALTLFWVFTFLNCFGMKLSSIVSIIGASIGTLLPMIVIIVLGAVWIFQDRPVAVNYPTTWLPDFSSLGNLSLFSAVLFGLIGMEMSAVHAEEVKNPQRDYPKALFYSALLIISTLSLGSLAIVIVVPNDSLSVVSGLVDAYAIFFNSYNMPWMTSVIAVLIILGGLSGVSAWIIGPTKGLLVSARDGSLPALFSRVNKYGSPVAILLTQGVIFTVLSTVFILLDSINAAYWVLSDLSAQMALLVYIMMFAAAIKLRYSKPEQPRGYTIPGGNLVMSLISGIGIICCIAAMIVGFIPPSQIPIKNVFLFECFLIGGLILFVFIPWLFAKKHDEQLCSEE.

The next 12 membrane-spanning stretches (helical) occupy residues 7-27, 37-57, 94-114, 121-141, 153-173, 196-216, 231-251, 282-302, 329-349, 359-379, 401-421, and 432-452; these read VLNVFSLVMINVIAVDSLRTL, LVFYYIFAALTFFIPVALVAA, VVWYPTMLAFIAATLSYLIAP, FYLLGTALTLFWVFTFLNCFG, ASIGTLLPMIVIIVLGAVWIF, LSLFSAVLFGLIGMEMSAVHA, FYSALLIISTLSLGSLAIVIV, VIAVLIILGGLSGVSAWIIGP, VAILLTQGVIFTVLSTVFILL, LSDLSAQMALLVYIMMFAAAI, MSLISGIGIICCIAAMIVGFI, and FLFECFLIGGLILFVFIPWLF.

This sequence belongs to the amino acid-polyamine-organocation (APC) superfamily.

It is found in the cell membrane. This is an uncharacterized protein from Legionella pneumophila subsp. pneumophila (strain Philadelphia 1 / ATCC 33152 / DSM 7513).